A 274-amino-acid chain; its full sequence is Formamidopyrimidine-DNA glycosylase (274 aa).

Pro2 acts as the Schiff-base intermediate with DNA in catalysis. The active-site Proton donor is Glu3. The active-site Proton donor; for beta-elimination activity is the Lys58. Residues His91, Arg110, and Lys152 each contribute to the DNA site. The FPG-type zinc-finger motif lies at 237 to 271 (KVYGRKNLPCLVCENKIETVVIAGRHSAFCPHCQP). Catalysis depends on Arg261, which acts as the Proton donor; for delta-elimination activity.

The protein belongs to the FPG family. As to quaternary structure, monomer. It depends on Zn(2+) as a cofactor.

It carries out the reaction Hydrolysis of DNA containing ring-opened 7-methylguanine residues, releasing 2,6-diamino-4-hydroxy-5-(N-methyl)formamidopyrimidine.. It catalyses the reaction 2'-deoxyribonucleotide-(2'-deoxyribose 5'-phosphate)-2'-deoxyribonucleotide-DNA = a 3'-end 2'-deoxyribonucleotide-(2,3-dehydro-2,3-deoxyribose 5'-phosphate)-DNA + a 5'-end 5'-phospho-2'-deoxyribonucleoside-DNA + H(+). Its function is as follows. Involved in base excision repair of DNA damaged by oxidation or by mutagenic agents. Acts as a DNA glycosylase that recognizes and removes damaged bases. Has a preference for oxidized purines, such as 7,8-dihydro-8-oxoguanine (8-oxoG). Has AP (apurinic/apyrimidinic) lyase activity and introduces nicks in the DNA strand. Cleaves the DNA backbone by beta-delta elimination to generate a single-strand break at the site of the removed base with both 3'- and 5'-phosphates. The sequence is that of Formamidopyrimidine-DNA glycosylase from Legionella pneumophila (strain Lens).